Here is a 236-residue protein sequence, read N- to C-terminus: UPF0502 protein Bxeno_B1639 (236 aa).

The protein belongs to the UPF0502 family.

This chain is UPF0502 protein Bxeno_B1639, found in Paraburkholderia xenovorans (strain LB400).